A 251-amino-acid polypeptide reads, in one-letter code: uncharacterized protein (251 aa).

This sequence to Anabaena PCC 7120 alr2406.

This is an uncharacterized protein from Synechocystis sp. (strain ATCC 27184 / PCC 6803 / Kazusa).